The sequence spans 244 residues: 5-oxoprolinase subunit A (244 aa).

It belongs to the LamB/PxpA family. As to quaternary structure, forms a complex composed of PxpA, PxpB and PxpC.

It carries out the reaction 5-oxo-L-proline + ATP + 2 H2O = L-glutamate + ADP + phosphate + H(+). Functionally, catalyzes the cleavage of 5-oxoproline to form L-glutamate coupled to the hydrolysis of ATP to ADP and inorganic phosphate. The chain is 5-oxoprolinase subunit A from Escherichia coli O6:K15:H31 (strain 536 / UPEC).